We begin with the raw amino-acid sequence, 239 residues long: Ribosomal RNA small subunit methyltransferase G (239 aa).

S-adenosyl-L-methionine contacts are provided by residues Gly-79, Phe-84, 130 to 131 (AE), and Arg-149. The span at 218–227 (KHKKTPKKYP) shows a compositional bias: basic residues. The disordered stretch occupies residues 218–239 (KHKKTPKKYPRQAGTPNKKPIA).

Belongs to the methyltransferase superfamily. RNA methyltransferase RsmG family.

It localises to the cytoplasm. Specifically methylates the N7 position of a guanine in 16S rRNA. The sequence is that of Ribosomal RNA small subunit methyltransferase G from Leuconostoc citreum (strain KM20).